Consider the following 350-residue polypeptide: Inhibin beta E chain (350 aa).

The signal sequence occupies residues methionine 1 to serine 21. Positions threonine 22–arginine 236 are excised as a propeptide. The N-linked (GlcNAc...) asparagine glycan is linked to asparagine 198. Intrachain disulfides connect cysteine 240/cysteine 248, cysteine 247/cysteine 315, cysteine 276/cysteine 347, and cysteine 280/cysteine 349.

It belongs to the TGF-beta family. As to quaternary structure, homodimeric or heterodimeric through association with alpha and beta subunits, linked by one or more disulfide bonds. Inhibins are heterodimers of one alpha and one beta subunit. Activins are homo- or heterodimers of beta subunits only.

The protein resides in the secreted. Functionally, inhibins and activins inhibit and activate, respectively, the secretion of follitropin by the pituitary gland. Inhibins/activins are involved in regulating a number of diverse functions such as hypothalamic and pituitary hormone secretion, gonadal hormone secretion, germ cell development and maturation, erythroid differentiation, insulin secretion, nerve cell survival, embryonic axial development or bone growth, depending on their subunit composition. Inhibins appear to oppose the functions of activins. Activin E is a homodimer of INHBE secreted by the liver that plays a crucial role in regulating metabolic homeostasis particularly in lipid metabolism and energy homeostasis. Plays a central role in the regulation of adipose tissue lipolysis by preventing the influx of fatty acids from adipose tissue into the liver. Mechanistically, signals via ACVR1C to activate SMAD2/3 signaling, suppressing PPARG target genes in adipose tissue, thereby reducing liver lipid content and improving glycemic control. Induces beige adipocyte formation and thermogenesis in response to cold exposure. The sequence is that of Inhibin beta E chain (Inhbe) from Rattus norvegicus (Rat).